Consider the following 345-residue polypeptide: SLAM family member 5 (345 aa).

Positions M1–G21 are cleaved as a signal peptide. Residues K22 to G225 are Extracellular-facing. An Ig-like V-type domain is found at I26–Y129. Residues P135–S207 enclose the Ig-like C2-type domain. N-linked (GlcNAc...) asparagine glycosylation is present at N150. A disulfide bond links C155 and C193. The chain crosses the membrane as a helical span at residues L226–F246. Over R247–I345 the chain is Cytoplasmic. Residues T277–I282 carry the ITSM 1 motif. Residue Y279 is modified to Phosphotyrosine. Y296 carries the post-translational modification Phosphotyrosine; by LYN. The ITSM 2 signature appears at T314–V319. Y316 is modified (phosphotyrosine). A disordered region spans residues G326–I345. A compositionally biased stretch (polar residues) spans A328–I345. Y341 carries the phosphotyrosine; by FES modification.

As to quaternary structure, homodimer; via its extracellular domain. Forms a head to tail dimer with a CD48 molecule from another cell. Interacts with SH2 domain-containing proteins SH2D1A/SAP and SH2D1B/EAT-2. Interacts with tyrosine-protein phosphatases PTPN6/SHP-1 and PTPN11//SHP-2 via its phosphorylated cytoplasmic domain, and this interaction is blocked by SH2D1A. Interacts (via phosphorylated ITSM 1 and 2) with INPP5D/SHIP1. In terms of processing, phosphorylated by tyrosine-protein kinase LCK on tyrosine residues following ligation induced by agonist monoclonal antibody. The association with SH2D1A is dependent of tyrosine phosphorylation of its cytoplasmic domain. Phosphorylated on Tyr-296 and Tyr-316 following platelet aggregation. Phosphorylated on tyrosine residues upon high affinity immunoglobulin epsilon receptor aggregation in mast cells. Post-translationally, N-glycosylated. As to expression, predominantly expressed in hematopoietic tissues, such as lymph node, spleen and peripheral leukocytes. Expressed in macrophages, B-cells, monocytes, platelets, thymocytes, T-cells and dendritic cells. Highly expressed in memory T-cells. Expressed in mast cells.

The protein localises to the cell membrane. Self-ligand receptor of the signaling lymphocytic activation molecule (SLAM) family. SLAM receptors triggered by homo- or heterotypic cell-cell interactions are modulating the activation and differentiation of a wide variety of immune cells and thus are involved in the regulation and interconnection of both innate and adaptive immune response. Activities are controlled by presence or absence of small cytoplasmic adapter proteins, SH2D1A/SAP and/or SH2D1B/EAT-2. Can mediate natural killer (NK) cell cytotoxicity dependent on SH2D1A and SH2D1B. Increases proliferative responses of activated T-cells and SH2D1A/SAP does not seem be required for this process. Homophilic interactions enhance interferon gamma/IFNG secretion in lymphocytes and induce platelet stimulation via a SH2D1A-dependent pathway. May serve as a marker for hematopoietic progenitor cells Required for a prolonged T-cell:B-cell contact, optimal T follicular helper function, and germinal center formation. In germinal centers involved in maintaining B-cell tolerance and in preventing autoimmunity. In mast cells negatively regulates high affinity immunoglobulin epsilon receptor signaling; independent of SH2D1A and SH2D1B but implicating FES and PTPN6/SHP-1. In macrophages enhances LPS-induced MAPK phosphorylation and NF-kappaB activation and modulates LPS-induced cytokine secretion; involving ITSM 2. Positively regulates macroautophagy in primary dendritic cells via stabilization of IRF8; inhibits TRIM21-mediated proteasomal degradation of IRF8. The chain is SLAM family member 5 (CD84) from Homo sapiens (Human).